Here is an 886-residue protein sequence, read N- to C-terminus: MSETKNPGDHTLSVSPTKTLSLKRPVEAGIVRQSFSHGRSKAVVVEKVKRRALGEPHVLRESAPALDVVAPAPQAAPPAPTQQPQPRVASRPQPQQRSSSGVILRSLTEEEREARSRALSGAHEREVEERKRAEIEAKARDEREAREREERAAAEARKREEETRRLQEAESKRRSESEAKRRLAGGEPAPAGANAAPRKAPALSAAPGSAAPSGQPGPAGAVGARPAEEEDAAKRIIRRPGMPTKVIVARPVKGAEQKSRGRLTVASATGDEEERTRSIAAFRRRTQRLKGHVSETKEKLSREVVLPETITIQELANRMSERAVDVIKLMMKQGQMAKITDVIDADTAQLIAEELGHTVKRVAESDVEEGLFDSPDVEEHLISRPPVVTIMGHVDHGKTSLLDALRHANVVSGEAGGITQHIGAYQIVASNGLPITFIDTPGHAAFTAMRARGAKVTDIVVLVVAADDGVMPQTAEAISHAKAAGVPIIVAINKIDKPDAKPERVRQELLQYEVQVESLGGDTLEVEVSATKKINLDKLADLIALQAELLDLKASPDRPAEGTVIEARLDKGRGPVATVLVQRGTLKVGDLIVGGSQWGKVRALIDDKGVNRQEAGPSMPVEVLGFSGSPEAGDRVGVVENEARAREIAAYRDRQKREQAAARGNLARGSLADMMSQLKTAARKEFPLVIKADVQGSLEAIVATLEKLNTDEVAARIIHAGVGGITESDVTLAEASGAVLIGFNVRAHKEGRQLAEQQGLEIRYYNIIYNLVDDVKAAMSGLLAPTLREDMLGNAEILEVFHISKVGKVAGCRVTDGRVERGANVRLIRDNVVVHEGKLSTLKRFKDEVKEVVAGQECGMAFEHYQDMRVGDVIECYRVEEIQRTL.

Disordered stretches follow at residues 1–25, 50–229, and 253–272; these read MSET…LKRP, RRAL…PAEE, and KGAE…TGDE. The span at 50 to 60 shows a compositional bias: basic and acidic residues; sequence RRALGEPHVLR. The span at 63 to 73 shows a compositional bias: low complexity; sequence APALDVVAPAP. Positions 74 to 83 are enriched in pro residues; it reads QAAPPAPTQQ. A compositionally biased stretch (low complexity) spans 84 to 106; the sequence is PQPRVASRPQPQQRSSSGVILRS. Positions 107–181 are enriched in basic and acidic residues; sequence LTEEEREARS…KRRSESEAKR (75 aa). Residues 185-225 are compositionally biased toward low complexity; that stretch reads GGEPAPAGANAAPRKAPALSAAPGSAAPSGQPGPAGAVGAR. In terms of domain architecture, tr-type G spans 383–553; the sequence is SRPPVVTIMG…ALQAELLDLK (171 aa). The segment at 392–399 is G1; the sequence is GHVDHGKT. 392-399 is a binding site for GTP; that stretch reads GHVDHGKT. The G2 stretch occupies residues 417–421; that stretch reads GITQH. The interval 439-442 is G3; that stretch reads DTPG. GTP-binding positions include 439–443 and 493–496; these read DTPGH and NKID. A G4 region spans residues 493-496; that stretch reads NKID. The segment at 529-531 is G5; that stretch reads SAT.

It belongs to the TRAFAC class translation factor GTPase superfamily. Classic translation factor GTPase family. IF-2 subfamily.

The protein resides in the cytoplasm. One of the essential components for the initiation of protein synthesis. Protects formylmethionyl-tRNA from spontaneous hydrolysis and promotes its binding to the 30S ribosomal subunits. Also involved in the hydrolysis of GTP during the formation of the 70S ribosomal complex. The polypeptide is Translation initiation factor IF-2 (Methylocella silvestris (strain DSM 15510 / CIP 108128 / LMG 27833 / NCIMB 13906 / BL2)).